Reading from the N-terminus, the 310-residue chain is Beta-ketoacyl-[acyl-carrier-protein] synthase III 1 (310 aa).

Active-site residues include cysteine 112 and histidine 235. The ACP-binding stretch occupies residues 236 to 240; it reads QANIR. Asparagine 265 is an active-site residue.

This sequence belongs to the thiolase-like superfamily. FabH family. As to quaternary structure, homodimer.

Its subcellular location is the cytoplasm. The catalysed reaction is malonyl-[ACP] + acetyl-CoA + H(+) = 3-oxobutanoyl-[ACP] + CO2 + CoA. It functions in the pathway lipid metabolism; fatty acid biosynthesis. Its function is as follows. Catalyzes the condensation reaction of fatty acid synthesis by the addition to an acyl acceptor of two carbons from malonyl-ACP. Catalyzes the first condensation reaction which initiates fatty acid synthesis and may therefore play a role in governing the total rate of fatty acid production. Possesses both acetoacetyl-ACP synthase and acetyl transacylase activities. Its substrate specificity determines the biosynthesis of branched-chain and/or straight-chain of fatty acids. The protein is Beta-ketoacyl-[acyl-carrier-protein] synthase III 1 of Bacillus anthracis.